We begin with the raw amino-acid sequence, 767 residues long: Polyribonucleotide nucleotidyltransferase (767 aa).

Aspartate 488 and aspartate 494 together coordinate Mg(2+). Positions 555-614 (PRLYTMKINPEKIRDVIGKGGSVIRALTEETGCQIDIGEDGTITIASTDADKAELAKKRI) constitute a KH domain. The S1 motif domain maps to 624–692 (GKVYEGPVVK…EKGRIKLSMK (69 aa)). Basic and acidic residues predominate over residues 700-742 (GMEFEERAPRREGGFGDRGDRGDRGPRRDRGGDRPERGERPAR). The tract at residues 700–767 (GMEFEERAPR…QPQQQQGQQQ (68 aa)) is disordered. A compositionally biased stretch (low complexity) spans 752–767 (GAPAAGQPQQQQGQQQ).

It belongs to the polyribonucleotide nucleotidyltransferase family. Requires Mg(2+) as cofactor.

It localises to the cytoplasm. It carries out the reaction RNA(n+1) + phosphate = RNA(n) + a ribonucleoside 5'-diphosphate. In terms of biological role, involved in mRNA degradation. Catalyzes the phosphorolysis of single-stranded polyribonucleotides processively in the 3'- to 5'-direction. This Leptothrix cholodnii (strain ATCC 51168 / LMG 8142 / SP-6) (Leptothrix discophora (strain SP-6)) protein is Polyribonucleotide nucleotidyltransferase.